A 534-amino-acid chain; its full sequence is Beta-glucosidase 31 (534 aa).

The signal sequence occupies residues 1-22 (MAIKLIALVITLCVASWDVAQG). Gln-51 is an a beta-D-glucoside binding site. The N-linked (GlcNAc...) asparagine glycan is linked to Asn-68. A beta-D-glucoside is bound by residues His-154 and 199–200 (NE). Glu-200 serves as the catalytic Proton donor. Cys-219 and Cys-227 are disulfide-bonded. Tyr-344 provides a ligand contact to a beta-D-glucoside. Asn-374 carries N-linked (GlcNAc...) asparagine glycosylation. Residue Glu-417 participates in a beta-D-glucoside binding. Glu-417 acts as the Nucleophile in catalysis. A glycan (N-linked (GlcNAc...) asparagine) is linked at Asn-425. A beta-D-glucoside contacts are provided by residues Trp-467, 474–475 (EW), and Phe-483.

This sequence belongs to the glycosyl hydrolase 1 family.

It carries out the reaction Hydrolysis of terminal, non-reducing beta-D-glucosyl residues with release of beta-D-glucose.. This Arabidopsis thaliana (Mouse-ear cress) protein is Beta-glucosidase 31.